The chain runs to 409 residues: Elongation factor Tu, plastid (409 aa).

Residues Lys-10–Ile-214 enclose the tr-type G domain. A G1 region spans residues Gly-19–Thr-26. GTP is bound at residue Gly-19 to Thr-26. Residue Thr-26 participates in Mg(2+) binding. The G2 stretch occupies residues Gly-60–Asn-64. The G3 stretch occupies residues Asp-81–Gly-84. GTP contacts are provided by residues Asp-81–His-85 and Asn-136–Asp-139. The interval Asn-136–Asp-139 is G4. A G5 region spans residues Ser-174 to Leu-176.

Belongs to the TRAFAC class translation factor GTPase superfamily. Classic translation factor GTPase family. EF-Tu/EF-1A subfamily.

The protein resides in the plastid. It carries out the reaction GTP + H2O = GDP + phosphate + H(+). GTP hydrolase that promotes the GTP-dependent binding of aminoacyl-tRNA to the A-site of ribosomes during protein biosynthesis. The polypeptide is Elongation factor Tu, plastid (tufA) (Euglena longa (Euglenophycean alga)).